The primary structure comprises 469 residues: Trigger factor (469 aa).

The region spanning 165-250 (GDCVTIDYLG…VKAISKPDEL (86 aa)) is the PPIase FKBP-type domain. A compositionally biased stretch (basic and acidic residues) spans 439 to 460 (EYDESDLTEKKPEKKKGVEKTP). Residues 439 to 469 (EYDESDLTEKKPEKKKGVEKTPIRKKAPKKG) are disordered.

The protein belongs to the FKBP-type PPIase family. Tig subfamily.

The protein resides in the cytoplasm. It catalyses the reaction [protein]-peptidylproline (omega=180) = [protein]-peptidylproline (omega=0). Its function is as follows. Involved in protein export. Acts as a chaperone by maintaining the newly synthesized protein in an open conformation. Functions as a peptidyl-prolyl cis-trans isomerase. The sequence is that of Trigger factor from Bartonella quintana (strain Toulouse) (Rochalimaea quintana).